A 113-amino-acid chain; its full sequence is Cell cycle protein GpsB (113 aa).

Residues 37–63 (KDYETYATLVKSLRQEIADLKEELTRK) adopt a coiled-coil conformation. The disordered stretch occupies residues 61–82 (TRKPQVSSAPSPSHPDPIDVAA).

It belongs to the GpsB family. Forms polymers through the coiled coil domains. Interacts with PBP1, MreC and EzrA.

Its subcellular location is the cytoplasm. In terms of biological role, divisome component that associates with the complex late in its assembly, after the Z-ring is formed, and is dependent on DivIC and PBP2B for its recruitment to the divisome. Together with EzrA, is a key component of the system that regulates PBP1 localization during cell cycle progression. Its main role could be the removal of PBP1 from the cell pole after pole maturation is completed. Also contributes to the recruitment of PBP1 to the division complex. Not essential for septum formation. The polypeptide is Cell cycle protein GpsB (Streptococcus pneumoniae (strain ATCC 700669 / Spain 23F-1)).